A 547-amino-acid polypeptide reads, in one-letter code: Chaperonin GroEL (547 aa).

ATP is bound by residues 29–32 (TLGP), Lys-50, 86–90 (DGTTT), Gly-414, 478–480 (NAA), and Asp-494.

The protein belongs to the chaperonin (HSP60) family. As to quaternary structure, forms a cylinder of 14 subunits composed of two heptameric rings stacked back-to-back. Interacts with the co-chaperonin GroES.

The protein resides in the cytoplasm. It catalyses the reaction ATP + H2O + a folded polypeptide = ADP + phosphate + an unfolded polypeptide.. Its function is as follows. Together with its co-chaperonin GroES, plays an essential role in assisting protein folding. The GroEL-GroES system forms a nano-cage that allows encapsulation of the non-native substrate proteins and provides a physical environment optimized to promote and accelerate protein folding. This chain is Chaperonin GroEL, found in Saccharophagus degradans (strain 2-40 / ATCC 43961 / DSM 17024).